Here is a 116-residue protein sequence, read N- to C-terminus: Ribonuclease P protein component (116 aa).

The protein belongs to the RnpA family. In terms of assembly, consists of a catalytic RNA component (M1 or rnpB) and a protein subunit.

It carries out the reaction Endonucleolytic cleavage of RNA, removing 5'-extranucleotides from tRNA precursor.. In terms of biological role, RNaseP catalyzes the removal of the 5'-leader sequence from pre-tRNA to produce the mature 5'-terminus. It can also cleave other RNA substrates such as 4.5S RNA. The protein component plays an auxiliary but essential role in vivo by binding to the 5'-leader sequence and broadening the substrate specificity of the ribozyme. This chain is Ribonuclease P protein component, found in Caldanaerobacter subterraneus subsp. tengcongensis (strain DSM 15242 / JCM 11007 / NBRC 100824 / MB4) (Thermoanaerobacter tengcongensis).